The sequence spans 294 residues: 4-hydroxy-tetrahydrodipicolinate synthase (294 aa).

Residue T48 participates in pyruvate binding. The Proton donor/acceptor role is filled by Y136. K164 functions as the Schiff-base intermediate with substrate in the catalytic mechanism. I206 is a binding site for pyruvate.

It belongs to the DapA family. In terms of assembly, homotetramer; dimer of dimers.

It is found in the cytoplasm. It catalyses the reaction L-aspartate 4-semialdehyde + pyruvate = (2S,4S)-4-hydroxy-2,3,4,5-tetrahydrodipicolinate + H2O + H(+). It participates in amino-acid biosynthesis; L-lysine biosynthesis via DAP pathway; (S)-tetrahydrodipicolinate from L-aspartate: step 3/4. Functionally, catalyzes the condensation of (S)-aspartate-beta-semialdehyde [(S)-ASA] and pyruvate to 4-hydroxy-tetrahydrodipicolinate (HTPA). The polypeptide is 4-hydroxy-tetrahydrodipicolinate synthase (Phenylobacterium zucineum (strain HLK1)).